Here is a 1286-residue protein sequence, read N- to C-terminus: DNA-directed RNA polymerase 147 kDa polypeptide (1286 aa).

It belongs to the poxviridae DNA-directed RNA polymerase 147 kDa subunit family. As to quaternary structure, the DNA-dependent RNA polymerase used for intermediate and late genes expression consists of eight subunits Rpo30/OPG66, Rpo7/OPG90, Rpo22/OPG103, Rpo147/OPG105, Rpo18/OPG119, Rpo19/OPG131, Rpo132/OPG151 and Rpo35/OPG156. The same holoenzyme, with the addition of the transcription-specificity factor OPG109, is used for early gene expression.

Its subcellular location is the virion. It carries out the reaction RNA(n) + a ribonucleoside 5'-triphosphate = RNA(n+1) + diphosphate. Functionally, part of the DNA-dependent RNA polymerase which catalyzes the transcription of viral DNA into RNA using the four ribonucleoside triphosphates as substrates. Responsible for the transcription of early, intermediate and late genes. DNA-dependent RNA polymerase associates with the early transcription factor (ETF), itself composed of OPG118 and OPG133, thereby allowing the early genes transcription. Late transcription, and probably also intermediate transcription, require newly synthesized RNA polymerase. The sequence is that of DNA-directed RNA polymerase 147 kDa polypeptide (OPG105) from Monkeypox virus.